We begin with the raw amino-acid sequence, 237 residues long: Sensory rhodopsin-2 (237 aa).

Residues 1-2 (MA) lie on the Extracellular side of the membrane. The helical transmembrane segment at 3 to 23 (LTTWFWVGAVGMLAGTVLPIR) threads the bilayer. Topologically, residues 24–31 (DCIRHPSH) are cytoplasmic. Residues 32 to 53 (RRYDLVLAGITGLAAIAYTTMG) traverse the membrane as a helical segment. At 54–67 (LGITATTVGDRTVY) the chain is on the extracellular side. Residues 68–89 (LARYIDWLVTTPLIVLYLAMLA) form a helical membrane-spanning segment. The Cytoplasmic segment spans residues 90-92 (RPG). Residues 93-115 (HRTSAWLLAADVFVIAAGIAAAL) form a helical membrane-spanning segment. Residues 116–119 (TTGV) lie on the Extracellular side of the membrane. The chain crosses the membrane as a helical span at residues 120 to 147 (QRWLFFAVGAAGYAALLYGLLGTLPRAL). The Cytoplasmic portion of the chain corresponds to 148 to 150 (GDD). A helical transmembrane segment spans residues 151-178 (PRVRSLFVTLRNITVVLWTLYPVVWLLS). Residues 179 to 186 (PAGIGILQ) are Extracellular-facing. The chain crosses the membrane as a helical span at residues 187–214 (TEMYTIVVVYLDFISKVAFVAFAVLGAD). K202 carries the N6-(retinylidene)lysine modification. Topologically, residues 215–237 (AVSRLVAADAAAPATAEPTPDGD) are cytoplasmic.

The protein belongs to the archaeal/bacterial/fungal opsin family. In terms of assembly, interacts with HTR-II.

It localises to the cell membrane. Its function is as follows. Photophobic photoreceptor responsible for the negative phototaxis. Activates the sensory rhodopsin II transducer (HTR-II) in response to blue light. In Halobacterium salinarum (strain ATCC 700922 / JCM 11081 / NRC-1) (Halobacterium halobium), this protein is Sensory rhodopsin-2 (sop2).